The sequence spans 428 residues: Dihydrolipoyllysine-residue acetyltransferase component of pyruvate dehydrogenase complex (428 aa).

The Lipoyl-binding domain maps to 2–77 (AFEFKLPDIG…TVGQTLITLD (76 aa)). Lys-43 is modified (N6-lipoyllysine). The interval 88–123 (GQEQEEAKKEEKTETVSKEEKVDAVAPNAPAAEAEA) is disordered. Residues 89–110 (QEQEEAKKEEKTETVSKEEKVD) show a composition bias toward basic and acidic residues. The span at 111-123 (AVAPNAPAAEAEA) shows a compositional bias: low complexity. The Peripheral subunit-binding (PSBD) domain occupies 130 to 167 (IAMPSVRKYAREKGVDIRLVQGTGKNGRVLKEDIDAFL). Over residues 177-194 (AAEEKAAPAAAKPATTEG) the composition is skewed to low complexity. The disordered stretch occupies residues 177-201 (AAEEKAAPAAAKPATTEGEFPETRE). His-399 is an active-site residue.

It belongs to the 2-oxoacid dehydrogenase family. In terms of assembly, forms a 60-polypeptide structural core with icosahedral symmetry. (R)-lipoate serves as cofactor.

It carries out the reaction N(6)-[(R)-dihydrolipoyl]-L-lysyl-[protein] + acetyl-CoA = N(6)-[(R)-S(8)-acetyldihydrolipoyl]-L-lysyl-[protein] + CoA. The pyruvate dehydrogenase complex catalyzes the overall conversion of pyruvate to acetyl-CoA and CO(2). It contains multiple copies of three enzymatic components: pyruvate dehydrogenase (E1), dihydrolipoamide acetyltransferase (E2) and lipoamide dehydrogenase (E3). The sequence is that of Dihydrolipoyllysine-residue acetyltransferase component of pyruvate dehydrogenase complex (pdhC) from Geobacillus stearothermophilus (Bacillus stearothermophilus).